A 429-amino-acid chain; its full sequence is 3-phosphoshikimate 1-carboxyvinyltransferase (429 aa).

3-phosphoshikimate-binding residues include Lys-22, Ser-23, and Arg-27. Lys-22 contacts phosphoenolpyruvate. Gly-94 and Arg-122 together coordinate phosphoenolpyruvate. 3-phosphoshikimate-binding residues include Ser-167, Gln-169, Asp-315, and Lys-342. Phosphoenolpyruvate is bound at residue Gln-169. Asp-315 serves as the catalytic Proton acceptor. Residues Arg-346 and Arg-388 each contribute to the phosphoenolpyruvate site.

This sequence belongs to the EPSP synthase family. Monomer.

It localises to the cytoplasm. It carries out the reaction 3-phosphoshikimate + phosphoenolpyruvate = 5-O-(1-carboxyvinyl)-3-phosphoshikimate + phosphate. It participates in metabolic intermediate biosynthesis; chorismate biosynthesis; chorismate from D-erythrose 4-phosphate and phosphoenolpyruvate: step 6/7. Functionally, catalyzes the transfer of the enolpyruvyl moiety of phosphoenolpyruvate (PEP) to the 5-hydroxyl of shikimate-3-phosphate (S3P) to produce enolpyruvyl shikimate-3-phosphate and inorganic phosphate. This is 3-phosphoshikimate 1-carboxyvinyltransferase from Geobacter metallireducens (strain ATCC 53774 / DSM 7210 / GS-15).